A 465-amino-acid polypeptide reads, in one-letter code: Methylenetetrahydrofolate--tRNA-(uracil-5-)-methyltransferase TrmFO (465 aa).

11-16 (GGGLAG) serves as a coordination point for FAD.

It belongs to the MnmG family. TrmFO subfamily. FAD is required as a cofactor.

It localises to the cytoplasm. The catalysed reaction is uridine(54) in tRNA + (6R)-5,10-methylene-5,6,7,8-tetrahydrofolate + NADH + H(+) = 5-methyluridine(54) in tRNA + (6S)-5,6,7,8-tetrahydrofolate + NAD(+). It catalyses the reaction uridine(54) in tRNA + (6R)-5,10-methylene-5,6,7,8-tetrahydrofolate + NADPH + H(+) = 5-methyluridine(54) in tRNA + (6S)-5,6,7,8-tetrahydrofolate + NADP(+). Functionally, catalyzes the folate-dependent formation of 5-methyl-uridine at position 54 (M-5-U54) in all tRNAs. The sequence is that of Methylenetetrahydrofolate--tRNA-(uracil-5-)-methyltransferase TrmFO from Acaryochloris marina (strain MBIC 11017).